Reading from the N-terminus, the 443-residue chain is Putative transporter AmpG 1 (443 aa).

The next 12 membrane-spanning stretches (helical) occupy residues 6-26 (HVCIIIWLFGFISGFNIMITG), 43-63 (IGILSFITLPYSINFLLAPVF), 74-96 (ILGHRLSWICLTSTTLISLTSIL), 106-128 (VLLSFIAFIISFFSATQDTILSA), 144-164 (GIYIFGYRVGMLLASSGAIYL), 172-192 (KIYQIFACVIFVYLILLILVS), 255-275 (DISLAYFIVLILIFLVLYRLP), 300-320 (VCKFCGVIGAIIGGLIGGIIM), 326-346 (LYSILLFGIIHALSHILFILL), 355-375 (ILFITIGIESITGGMTMTAYI), 394-414 (LSSMMGISRSIFPIISGYMVV), and 416-436 (FGWQNFFLFTTIITIPSLLIL).

The protein belongs to the major facilitator superfamily.

The protein resides in the cell inner membrane. This chain is Putative transporter AmpG 1 (ampG1), found in Rickettsia typhi (strain ATCC VR-144 / Wilmington).